The chain runs to 590 residues: Multidrug resistance-like ATP-binding protein MdlA (590 aa).

The region spanning 18-303 is the ABC transmembrane type-1 domain; sequence YLGAVALLVI…LAWMFNIVER (286 aa). The next 6 membrane-spanning stretches (helical) occupy residues 23-43, 53-73, 134-154, 155-175, 248-268, and 280-300; these read ALLV…GIVV, TGQI…VYLL, GVLT…MMST, QISW…AIMI, IYIA…WMVV, and FMMY…MFNI. An ABC transporter domain is found at 337–570; it reads VNIHQFTYPQ…SGWYRDMYRY (234 aa). 369–376 contacts ATP; the sequence is GPTGSGKS.

The protein belongs to the ABC transporter superfamily. Drug exporter-2 (TC 3.A.1.117) family.

The protein resides in the cell inner membrane. It catalyses the reaction ATP + H2O + xenobioticSide 1 = ADP + phosphate + xenobioticSide 2.. The chain is Multidrug resistance-like ATP-binding protein MdlA (mdlA) from Escherichia coli (strain K12).